The primary structure comprises 258 residues: Granzyme A (258 aa).

Residues 1-26 (MNIPFPFSFPPAICLLLIPGVFPVSC) form the signal peptide. Positions 27-28 (EG) are cleaved as a propeptide — activation peptide. The Peptidase S1 domain maps to 29–255 (IIGGNEVAPH…HLNWIKKTIA (227 aa)). Residues Cys-52 and Cys-68 are joined by a disulfide bond. Catalysis depends on charge relay system residues His-67 and Asp-112. 3 disulfides stabilise this stretch: Cys-146–Cys-217, Cys-178–Cys-196, and Cys-207–Cys-230. N-linked (GlcNAc...) asparagine glycosylation occurs at Asn-169. The active-site Charge relay system is the Ser-211.

It belongs to the peptidase S1 family. Granzyme subfamily. In terms of assembly, homodimer; disulfide-linked. Interacts with APEX1.

It is found in the secreted. Its subcellular location is the cytoplasmic granule. The enzyme catalyses Hydrolysis of proteins, including fibronectin, type IV collagen and nucleolin. Preferential cleavage: -Arg-|-Xaa-, -Lys-|-Xaa- &gt;&gt; -Phe-|-Xaa- in small molecule substrates.. Abundant protease in the cytosolic granules of cytotoxic T-cells and NK-cells which activates caspase-independent pyroptosis when delivered into the target cell through the immunological synapse. It cleaves after Lys or Arg. Cleaves APEX1 after 'Lys-31' and destroys its oxidative repair activity. Cleaves the nucleosome assembly protein SET after 'Lys-189', which disrupts its nucleosome assembly activity and allows the SET complex to translocate into the nucleus to nick and degrade the DNA. This chain is Granzyme A (GZMA), found in Bos taurus (Bovine).